The sequence spans 319 residues: Probable cystathionine gamma-synthase (319 aa).

Lys197 is modified (N6-(pyridoxal phosphate)lysine).

The protein belongs to the trans-sulfuration enzymes family. Homotetramer. Pyridoxal 5'-phosphate is required as a cofactor.

The protein resides in the cytoplasm. It catalyses the reaction O-succinyl-L-homoserine + L-cysteine = L,L-cystathionine + succinate + H(+). In terms of biological role, catalyzes the formation of L-cystathionine from O-succinyl-L-homoserine (OSHS) and L-cysteine, via a gamma-replacement reaction. In the absence of thiol, catalyzes gamma-elimination to form 2-oxobutanoate, succinate and ammonia. The sequence is that of Probable cystathionine gamma-synthase (metB) from Herpetosiphon aurantiacus (Herpetosiphon giganteus).